The chain runs to 72 residues: Translation initiation factor IF-1 (72 aa).

Residues 1 to 72 (MSKEEVLEFS…TKGRIIYRYK (72 aa)) enclose the S1-like domain.

This sequence belongs to the IF-1 family. As to quaternary structure, component of the 30S ribosomal translation pre-initiation complex which assembles on the 30S ribosome in the order IF-2 and IF-3, IF-1 and N-formylmethionyl-tRNA(fMet); mRNA recruitment can occur at any time during PIC assembly.

It is found in the cytoplasm. Its function is as follows. One of the essential components for the initiation of protein synthesis. Stabilizes the binding of IF-2 and IF-3 on the 30S subunit to which N-formylmethionyl-tRNA(fMet) subsequently binds. Helps modulate mRNA selection, yielding the 30S pre-initiation complex (PIC). Upon addition of the 50S ribosomal subunit IF-1, IF-2 and IF-3 are released leaving the mature 70S translation initiation complex. The chain is Translation initiation factor IF-1 from Bartonella henselae (strain ATCC 49882 / DSM 28221 / CCUG 30454 / Houston 1) (Rochalimaea henselae).